The chain runs to 225 residues: Mediator of RNA polymerase II transcription subunit 8 (225 aa).

Residues 1-24 (MNSIHSANSNTVSTSEINTSQIPT) are disordered. Residues 170–204 (VEELKYLDSEDEKKETEENKKIENQKYEEELKITA) adopt a coiled-coil conformation.

The protein belongs to the Mediator complex subunit 8 family. Component of the Mediator complex.

Its subcellular location is the nucleus. Functionally, component of the Mediator complex, a coactivator involved in the regulated transcription of nearly all RNA polymerase II-dependent genes. Mediator functions as a bridge to convey information from gene-specific regulatory proteins to the basal RNA polymerase II transcription machinery. Mediator is recruited to promoters by direct interactions with regulatory proteins and serves as a scaffold for the assembly of a functional preinitiation complex with RNA polymerase II and the general transcription factors. The polypeptide is Mediator of RNA polymerase II transcription subunit 8 (MED8) (Debaryomyces hansenii (strain ATCC 36239 / CBS 767 / BCRC 21394 / JCM 1990 / NBRC 0083 / IGC 2968) (Yeast)).